Reading from the N-terminus, the 252-residue chain is MKTVTVKDLVIGTGAPKIIVSLMAKDIARVKSEALAYREADFDILEWRVDHFADLSNVESVMAAAKILRETMPEKPLLFTFRSAKEGGEQAISTEAYIALNRAAIDSGLVDMIDLELFTGDDQVKETVAYAHAHDVKVVMSNHDFHKTPEAEEIIARLRKMQSFDADIPKIALMPQSTSDVLALLAATLEMQEQYADRPIITMSMAKTGVISRLAGEVFGSAATFGAVKKASAPGQISVNDLRTVLTILHQA.

3-dehydroquinate contacts are provided by residues serine 21, 46-48 (EWR), and arginine 82. The Proton donor/acceptor role is filled by histidine 143. The active-site Schiff-base intermediate with substrate is lysine 170. 3-dehydroquinate contacts are provided by arginine 213, serine 232, and glutamine 236.

This sequence belongs to the type-I 3-dehydroquinase family. In terms of assembly, homodimer.

It catalyses the reaction 3-dehydroquinate = 3-dehydroshikimate + H2O. The protein operates within metabolic intermediate biosynthesis; chorismate biosynthesis; chorismate from D-erythrose 4-phosphate and phosphoenolpyruvate: step 3/7. Its function is as follows. Involved in the third step of the chorismate pathway, which leads to the biosynthesis of aromatic amino acids. Catalyzes the cis-dehydration of 3-dehydroquinate (DHQ) and introduces the first double bond of the aromatic ring to yield 3-dehydroshikimate. The protein is 3-dehydroquinate dehydratase of Escherichia coli O157:H7.